The following is a 209-amino-acid chain: Uracil phosphoribosyltransferase (209 aa).

5-phospho-alpha-D-ribose 1-diphosphate contacts are provided by residues R79, R104, and 131-139; that span reads DPMLATGGS. Residues I194 and 199–201 contribute to the uracil site; that span reads GDA. 5-phospho-alpha-D-ribose 1-diphosphate is bound at residue D200.

It belongs to the UPRTase family. Mg(2+) is required as a cofactor.

The enzyme catalyses UMP + diphosphate = 5-phospho-alpha-D-ribose 1-diphosphate + uracil. It functions in the pathway pyrimidine metabolism; UMP biosynthesis via salvage pathway; UMP from uracil: step 1/1. Allosterically activated by GTP. In terms of biological role, catalyzes the conversion of uracil and 5-phospho-alpha-D-ribose 1-diphosphate (PRPP) to UMP and diphosphate. This is Uracil phosphoribosyltransferase from Finegoldia magna (strain ATCC 29328 / DSM 20472 / WAL 2508) (Peptostreptococcus magnus).